A 493-amino-acid chain; its full sequence is Cytochrome P450 2E1 (493 aa).

298–303 is a binding site for substrate; the sequence is FAGTET. Position 437 (Cys437) interacts with heme.

The protein belongs to the cytochrome P450 family. Interacts with chaperones HSP70 and HSP90; this interaction is required for initial targeting to mitochondria. Heme is required as a cofactor.

It localises to the endoplasmic reticulum membrane. The protein resides in the microsome membrane. The protein localises to the mitochondrion inner membrane. The catalysed reaction is an organic molecule + reduced [NADPH--hemoprotein reductase] + O2 = an alcohol + oxidized [NADPH--hemoprotein reductase] + H2O + H(+). It carries out the reaction (5Z,8Z,11Z)-eicosatrienoate + reduced [NADPH--hemoprotein reductase] + O2 = 19-hydroxy-(5Z,8Z,11Z)-eicosatrienoate + oxidized [NADPH--hemoprotein reductase] + H2O + H(+). The enzyme catalyses (5Z,8Z,11Z,14Z,17Z)-eicosapentaenoate + reduced [NADPH--hemoprotein reductase] + O2 = 19-hydroxy-(5Z,8Z,11Z,14Z,17Z)-eicosapentaenoate + oxidized [NADPH--hemoprotein reductase] + H2O + H(+). It catalyses the reaction (4Z,7Z,10Z,13Z,16Z,19Z)-docosahexaenoate + reduced [NADPH--hemoprotein reductase] + O2 = 21-hydroxy-(4Z,7Z,10Z,13Z,16Z,19Z)-docosahexaenoate + oxidized [NADPH--hemoprotein reductase] + H2O + H(+). The catalysed reaction is dodecanoate + reduced [NADPH--hemoprotein reductase] + O2 = 11-hydroxydodecanoate + oxidized [NADPH--hemoprotein reductase] + H2O + H(+). It carries out the reaction tetradecanoate + reduced [NADPH--hemoprotein reductase] + O2 = 13-hydroxytetradecanoate + oxidized [NADPH--hemoprotein reductase] + H2O + H(+). The enzyme catalyses 4-nitrophenol + NADPH + O2 + H(+) = 4-nitrocatechol + NADP(+) + H2O. The protein operates within lipid metabolism; fatty acid metabolism. The omega-1 hydroxylase activity is stimulated by cytochrome b5. Its function is as follows. A cytochrome P450 monooxygenase involved in the metabolism of fatty acids. Mechanistically, uses molecular oxygen inserting one oxygen atom into a substrate, and reducing the second into a water molecule, with two electrons provided by NADPH via cytochrome P450 reductase (NADPH--hemoprotein reductase). Catalyzes the hydroxylation of carbon-hydrogen bonds. Hydroxylates fatty acids specifically at the omega-1 position displaying the highest catalytic activity for saturated fatty acids. May be involved in the oxidative metabolism of xenobiotics. This Rattus norvegicus (Rat) protein is Cytochrome P450 2E1.